A 513-amino-acid polypeptide reads, in one-letter code: Membrane-bound transcription factor site-2 protease homolog (513 aa).

The Cytoplasmic portion of the chain corresponds to 1–60 (MEISGRRMRRFRMRFRRDHLTGGENIENEASCCYCDLKISNFNEPIFRLGRRFSGVLKVW). A helical membrane pass occupies residues 61–81 (FSIGLGFGVASLILVTVFLLL). Residues 82–107 (QFHSNPLFSNRLTSAVFGFSPSTRVS) lie on the Lumenal side of the membrane. The chain crosses the membrane as a helical span at residues 108–128 (LSGIAYVLVSTVITVSVHELG). His125 is a binding site for Zn(2+). Glu126 is an active-site residue. Residue His129 participates in Zn(2+) binding. Over 129–137 (HALAAASEG) the chain is Cytoplasmic. Residues 138 to 158 (IQMEYIAVFIAAIFPGGLVAF) form a helical membrane-spanning segment. Residues 159–182 (DNDVLQSLPSFNALRIYCAGIWHN) are Lumenal-facing. The helical transmembrane segment at 183–203 (AVFCALCVFALFLLPVMLSPF) threads the bilayer. Residues 204–437 (YKHGESLTVV…KSFPNILERS (234 aa)) are Cytoplasmic-facing. Residues 438–458 (LTCTFHVSLALVLLNSLPVYY) form a helical membrane-spanning segment. Over 459 to 485 (LDGESILESSLQSFTWLSPRKKKKALQ) the chain is Lumenal. Residues 486-506 (VCLVGGSLLSFLAFFRIFLLG) form a helical membrane-spanning segment. Over 507–513 (LPLSRRW) the chain is Cytoplasmic.

The protein belongs to the peptidase M50A family. The cofactor is Zn(2+). As to expression, expressed in the vasculature of roots, cotyledons and leaves.

The protein localises to the golgi apparatus membrane. Metalloprotease that catalyzes the second step (site-2 cleavage) in the proteolytic activation of various factors, after site-1 cleavage. Part of a regulated intramembrane proteolysis (RIP) cascade. After ER stress, cleaves BZIP17 and BZIP28 proteins which function as stress sensors and transducers in ER stress signaling pathway. The N-terminal bZIP component is translocated to the nucleus, where it activates the expression and production of ER chaperones, as well as proteins involved in brassinosteroid (BR) signaling, which is required for stress acclimation and growth. This chain is Membrane-bound transcription factor site-2 protease homolog (S2P), found in Arabidopsis thaliana (Mouse-ear cress).